Reading from the N-terminus, the 333-residue chain is Cytochrome f (333 aa).

An N-terminal signal peptide occupies residues 1–37 (MRNSCKKARRTRPLKATIQALLVAIATMTFFFTSDIA). Over 38-298 (LPQSAAAYPF…TEIVLQDPNR (261 aa)) the chain is Cytoplasmic. Heme contacts are provided by tyrosine 45, cysteine 66, cysteine 69, and histidine 70. A helical membrane pass occupies residues 299–319 (VKWMIAFICLVMLAQLMLILK). The Lumenal, thylakoid segment spans residues 320–333 (KKQVEKVQAAEMNF).

The protein belongs to the cytochrome f family. In terms of assembly, the 4 large subunits of the cytochrome b6-f complex are cytochrome b6, subunit IV (17 kDa polypeptide, PetD), cytochrome f and the Rieske protein, while the 4 small subunits are PetG, PetL, PetM and PetN. The complex functions as a dimer. Requires heme as cofactor.

It is found in the cellular thylakoid membrane. In terms of biological role, component of the cytochrome b6-f complex, which mediates electron transfer between photosystem II (PSII) and photosystem I (PSI), cyclic electron flow around PSI, and state transitions. In Mastigocladus laminosus (Fischerella sp.), this protein is Cytochrome f (petA).